Here is a 99-residue protein sequence, read N- to C-terminus: Defensin-A4 (99 aa).

The N-terminal stretch at 1–21 is a signal peptide; sequence MKTLCLLFAVLCLVTWTQARG. Residues 22–68 constitute a propeptide that is removed on maturation; that stretch reads AEVEENLTAQDGEVDIAGDNGDVQLTLNTDDFESFTLKTLTLGHPRV. Cystine bridges form between cysteine 73–cysteine 97, cysteine 75–cysteine 89, and cysteine 79–cysteine 96.

This sequence belongs to the alpha-defensin family. As to expression, lowly expressed in spleen, and expressed at lower levels in kidney and lung.

The protein localises to the secreted. In terms of biological role, has antimicrobial activity. In Ornithorhynchus anatinus (Duckbill platypus), this protein is Defensin-A4.